The following is a 225-amino-acid chain: MSNTVATMINKRNIMRNYIKIGVAGPVGAGKTALIEKLTREIASKYSVAVITNDIYTQEDAEFLTKNSLLPPERIMGVETGGCPHTAIREDASMNLEAVDEMVTRFPDVEIVFIESGGDNLSATFSPDLADVTIFVIDVAQGEKIPRKGGPGITRSDLLVINKTDLAPFVGVDLSVMERDARRMRNGQPFIFTNLMKKENLDGVIGWIEKYALLKNVEEPASLVR.

Position 25–32 (25–32 (GPVGAGKT)) interacts with GTP.

This sequence belongs to the SIMIBI class G3E GTPase family. UreG subfamily. As to quaternary structure, homodimer. UreD, UreF and UreG form a complex that acts as a GTP-hydrolysis-dependent molecular chaperone, activating the urease apoprotein by helping to assemble the nickel containing metallocenter of UreC. The UreE protein probably delivers the nickel.

Its subcellular location is the cytoplasm. Facilitates the functional incorporation of the urease nickel metallocenter. This process requires GTP hydrolysis, probably effectuated by UreG. In Haemophilus influenzae (strain 86-028NP), this protein is Urease accessory protein UreG.